The primary structure comprises 528 residues: Na(+)/H(+) antiporter NhaB (528 aa).

The Cytoplasmic segment spans residues 1–23; it reads MPISLGNAFIKNFLGKAPDWYKV. A helical transmembrane segment spans residues 24 to 46; that stretch reads AIIAFLIINPIVFFLINPFVAGW. Over 47–95 the chain is Periplasmic; that stretch reads LLVAEFIFTLAMALKCYPLQPGGLLAIEAIAIGMTSPAQVKHELVANIE. A helical transmembrane segment spans residues 96–118; that stretch reads VLLLLVFMVAGIYFMKHLLLFIF. At 119-129 the chain is on the cytoplasmic side; it reads TKILLGIRSKT. Residues 130-163 traverse the membrane as a helical segment; that stretch reads LLSLAFCFAAAFLSAFLDALTVIAVVISVAIGFY. At 164–239 the chain is on the periplasmic side; sequence SIYHKVASGN…ADQAGWLFGE (76 aa). Residues 240-262 traverse the membrane as a helical segment; it reads FLIRMSPVTLPVFFCGLITCALV. Over 263 to 297 the chain is Cytoplasmic; the sequence is EKLKVFGYGAKLPNNVRQILVDFDNEERKTRTNQD. A helical transmembrane segment spans residues 298 to 317; that stretch reads VAKLWVQGLIAVWLIVALAL. Residues 318–320 are Periplasmic-facing; sequence HLA. A helical transmembrane segment spans residues 321–340; sequence AVGLIGLSVIILATAFTGVI. Topologically, residues 341–352 are cytoplasmic; that stretch reads EEHSMGKAFEEA. Residues 353-375 traverse the membrane as a helical segment; the sequence is LPFTALLAVFFSIVAVIIDQELF. Residues 376 to 389 are Periplasmic-facing; sequence KPVIDAVLAVEDKG. The chain crosses the membrane as a helical span at residues 390-412; that stretch reads TQLALFYVANGLLSMVSDNVFVG. The Cytoplasmic segment spans residues 413-477; it reads TVYINEVKTA…PLIRLSYGRM (65 aa). A helical membrane pass occupies residues 478–500; the sequence is VIMALPYTIVLAIVGLMGIMFFL. At 501-528 the chain is on the periplasmic side; the sequence is EPATASFYDAGWILPHSGDLTPVVSGGH.

It belongs to the NhaB Na(+)/H(+) (TC 2.A.34) antiporter family.

Its subcellular location is the cell inner membrane. It catalyses the reaction 2 Na(+)(in) + 3 H(+)(out) = 2 Na(+)(out) + 3 H(+)(in). Functionally, na(+)/H(+) antiporter that extrudes sodium in exchange for external protons. This is Na(+)/H(+) antiporter NhaB from Vibrio alginolyticus.